The chain runs to 829 residues: MKPPGSISRRPTLTGCSLPGASCGPGRCPAGPVPARAPPCRLLLVLLLLPALATSSRPRARGAAAPSAPHWNETAEKTLGVLADEDNTLQQNSSSRNTSYSSAVQKEITLPSRLVYYINQDSESPYHVLDTKARHQQKHNKAVHLAQASFQIEAFGSKFILDLTLNNGLLSSDYVEIHYEDGKQMYSKGGEHCYYHGSIRGVKDSRVALSTCNGLHGMFEDDTFVYMIEPLELTDDEKSTGRPHIIQKTLAGQYSKQMKNLSTDGSDQWPLLPELQWLRRRKRAVNPSRGVFEEMKYLELMIVNDHKTYKKHRSSHAHTNNFAKSVVNLVDSIYKEQLNTRVVLVAVETWTEKDHIDITINPVQMLHDFSKYRQRIKQHADAVHLISRVTFHYKRSSLSYFGGVCSRIRGVGVNEYGLPMAVAQVLSQSLAQNLGIQWEPSSRKPKCECIESWGGCIMEETGVSHSRKFSKCSILEYRDFLQRGGGACLFNRPTKLFEPTECGNGYVEAGEECDCGFHVECYGVCCKKCSLSNGAHCSDGPCCNNTSCLFQSRGYECRDAVNSCDITEYCTGDSGQCPPNLHKQDGYSCNQNQGRCYNGECKTRDNQCQYIWGTKAAGSDKFCYEKLNTEGTEKGNCGKDGDRWIPCSKHDVFCGFLLCTNLTRAPRIGQLQGEIIPTSFYHQGRVIDCSGAHVVLDDDTDVGYVEDGTPCGPSMMCLDRKCLQIQALNMSSCPLDSRGKVCSGHGVCSNEATCICDFTWAGTDCSIRDPVRNPNPPKDEGPKGPSATNLIIGSIAGAILVAAIVLGGTGWGFKNVKKRRFDPTQQGPI.

Residues 1-55 form the signal peptide; sequence MKPPGSISRRPTLTGCSLPGASCGPGRCPAGPVPARAPPCRLLLVLLLLPALATS. The propeptide occupies 56–283; sequence SRPRARGAAA…ELQWLRRRKR (228 aa). Residues Asn72, Asn92, Asn97, and Asn260 are each glycosylated (N-linked (GlcNAc...) asparagine). Over 284 to 789 the chain is Extracellular; that stretch reads AVNPSRGVFE…EGPKGPSATN (506 aa). A Peptidase M12B domain is found at 296 to 493; sequence KYLELMIVND…GGGACLFNRP (198 aa). 3 disulfides stabilise this stretch: Cys405–Cys488, Cys447–Cys472, and Cys449–Cys456. In terms of domain architecture, Disintegrin spans 499–585; sequence PTECGNGYVE…QCPPNLHKQD (87 aa). Residues Asn544 and Asn545 are each glycosylated (N-linked (GlcNAc...) asparagine). Cysteines 557 and 577 form a disulfide. Asn661 and Asn729 each carry an N-linked (GlcNAc...) asparagine glycan. Residues 729 to 766 enclose the EGF-like domain; the sequence is NMSSCPLDSRGKVCSGHGVCSNEATCICDFTWAGTDCS. Cystine bridges form between Cys733–Cys748, Cys742–Cys754, and Cys756–Cys765. A helical membrane pass occupies residues 790 to 810; it reads LIIGSIAGAILVAAIVLGGTG. The Cytoplasmic segment spans residues 811-829; sequence WGFKNVKKRRFDPTQQGPI.

In terms of assembly, can bind to LGI1 and LGI4. In terms of tissue distribution, brain specific.

The protein resides in the cell membrane. Its subcellular location is the secreted. Functionally, may play a role in cell-cell and cell-matrix interactions. This is a non-catalytic metalloprotease-like protein. This chain is Disintegrin and metalloproteinase domain-containing protein 23 (Adam23), found in Mus musculus (Mouse).